Consider the following 371-residue polypeptide: Peptide chain release factor 2 (371 aa).

N5-methylglutamine is present on glutamine 252.

The protein belongs to the prokaryotic/mitochondrial release factor family. Post-translationally, methylated by PrmC. Methylation increases the termination efficiency of RF2.

It is found in the cytoplasm. Functionally, peptide chain release factor 2 directs the termination of translation in response to the peptide chain termination codons UGA and UAA. The polypeptide is Peptide chain release factor 2 (Staphylococcus epidermidis (strain ATCC 35984 / DSM 28319 / BCRC 17069 / CCUG 31568 / BM 3577 / RP62A)).